Reading from the N-terminus, the 497-residue chain is Trichoplein keratin filament-binding protein (497 aa).

3 coiled-coil regions span residues H67 to E140, A166 to R271, and M327 to M479. The tract at residues K72–E457 is interaction with keratin proteins. A disordered region spans residues T167–N188. Positions Q168–N188 are enriched in basic and acidic residues. Residues R258 to E424 form a trichohyalin/plectin homology domain region. The tract at residues A441–D497 is disordered. The span at Q444–Q453 shows a compositional bias: basic and acidic residues. A compositionally biased stretch (basic residues) spans L488–D497.

Belongs to the TCHP family. Interacts specifically with keratin proteins including, KRT5, KRT6A, KRT8, KRT14, KRT16 and KRT18. Interacts with KCTD17. In terms of processing, ubiquitinated. Ubiquitination by the BCR(KCTD17) E3 ubiquitin ligase complex results in proteasomal degradation, and induces ciliogenesis. In terms of tissue distribution, expressed in all tissues examined, including brain, liver, small intestine, large intestine, lung and heart. Found concentrated in tubular structures within hepatocytes, and in the apical cortical region and desmosomes of the apical junctional domain in enterocytes of the small intestine. In the hair follicle, localized at the outer root sheath. Also expressed in blood vessels (at protein level).

It is found in the cytoplasm. The protein localises to the cytoskeleton. The protein resides in the cell membrane. It localises to the mitochondrion. Its subcellular location is the microtubule organizing center. It is found in the centrosome. Its function is as follows. Tumor suppressor which has the ability to inhibit cell growth and be pro-apoptotic during cell stress. May act as a 'capping' or 'branching' protein for keratin filaments in the cell periphery. May regulate K8/K18 filament and desmosome organization mainly at the apical or peripheral regions of simple epithelial cells. Is a negative regulator of ciliogenesis. This Mus musculus (Mouse) protein is Trichoplein keratin filament-binding protein.